A 443-amino-acid chain; its full sequence is Mevalonate kinase (443 aa).

Residues K12, S138, and 143–149 (GAGLGSS) contribute to the ATP site. Mg(2+) contacts are provided by S149 and E191. Catalysis depends on D202, which acts as the Proton acceptor.

Belongs to the GHMP kinase family. Mevalonate kinase subfamily. In terms of assembly, homodimer. Mg(2+) is required as a cofactor.

Its subcellular location is the cytoplasm. It is found in the cytosol. The enzyme catalyses (R)-mevalonate + ATP = (R)-5-phosphomevalonate + ADP + H(+). It participates in isoprenoid biosynthesis; isopentenyl diphosphate biosynthesis via mevalonate pathway; isopentenyl diphosphate from (R)-mevalonate: step 1/3. Farnesyl pyrophosphate and geranyl pyrophosphate inhibit mevalonate kinase by binding competitively at the ATP-binding site. Mevalonate kinase; part of the second module of ergosterol biosynthesis pathway that includes the middle steps of the pathway. ERG12 converts mevalonate into 5-phosphomevalonate. The second module is carried out in the vacuole and involves the formation of farnesyl diphosphate, which is also an important intermediate in the biosynthesis of ubiquinone, dolichol, heme and prenylated proteins. Activity by the mevalonate kinase ERG12 first converts mevalonate into 5-phosphomevalonate. 5-phosphomevalonate is then further converted to 5-diphosphomevalonate by the phosphomevalonate kinase ERG8. The diphosphomevalonate decarboxylase MVD1/ERG19 then produces isopentenyl diphosphate. The isopentenyl-diphosphate delta-isomerase IDI1 then catalyzes the 1,3-allylic rearrangement of the homoallylic substrate isopentenyl (IPP) to its highly electrophilic allylic isomer, dimethylallyl diphosphate (DMAPP). Finally the farnesyl diphosphate synthase ERG20 catalyzes the sequential condensation of isopentenyl pyrophosphate with dimethylallyl pyrophosphate, and then with the resultant geranylpyrophosphate to the ultimate product farnesyl pyrophosphate. The sequence is that of Mevalonate kinase from Saccharomyces cerevisiae (strain ATCC 204508 / S288c) (Baker's yeast).